The chain runs to 215 residues: Cytochrome b6 (215 aa).

The helical transmembrane segment at 32 to 52 (IFYCFGGLVLTCFLIQVATGF) threads the bilayer. C35 provides a ligand contact to heme c. H86 and H100 together coordinate heme b. The next 3 helical transmembrane spans lie at 90 to 110 (ASMMVLMMVLHVFRVYLTGGF), 116 to 136 (LTWVTGVTLSVVTVSFGVTGY), and 186 to 206 (AHTFVLPLAAAVLMLTHFLMI). H187 and H202 together coordinate heme b.

It belongs to the cytochrome b family. PetB subfamily. The 4 large subunits of the cytochrome b6-f complex are cytochrome b6, subunit IV (17 kDa polypeptide, PetD), cytochrome f and the Rieske protein, while the 4 small subunits are PetG, PetL, PetM and PetN. The complex functions as a dimer. Requires heme b as cofactor. It depends on heme c as a cofactor.

Its subcellular location is the plastid. The protein localises to the chloroplast thylakoid membrane. Its function is as follows. Component of the cytochrome b6-f complex, which mediates electron transfer between photosystem II (PSII) and photosystem I (PSI), cyclic electron flow around PSI, and state transitions. This chain is Cytochrome b6, found in Phaeodactylum tricornutum (strain CCAP 1055/1).